Here is a 312-residue protein sequence, read N- to C-terminus: uncharacterized protein (312 aa).

This is an uncharacterized protein from Mycoplasma (Bacteriophage L2).